Here is a 188-residue protein sequence, read N- to C-terminus: Segregation and condensation protein B (188 aa).

This sequence belongs to the ScpB family. Homodimer. Homodimerization may be required to stabilize the binding of ScpA to the Smc head domains. Component of a cohesin-like complex composed of ScpA, ScpB and the Smc homodimer, in which ScpA and ScpB bind to the head domain of Smc. The presence of the three proteins is required for the association of the complex with DNA.

It is found in the cytoplasm. In terms of biological role, participates in chromosomal partition during cell division. May act via the formation of a condensin-like complex containing Smc and ScpA that pull DNA away from mid-cell into both cell halves. This is Segregation and condensation protein B from Streptococcus gordonii (strain Challis / ATCC 35105 / BCRC 15272 / CH1 / DL1 / V288).